The following is a 1353-amino-acid chain: Xanthine dehydrogenase 2 (1353 aa).

The region spanning 7–93 (MEAIMYVNGV…GMHVISIEGV (87 aa)) is the 2Fe-2S ferredoxin-type domain. Positions 45, 50, 53, 75, 115, 118, 151, and 153 each coordinate [2Fe-2S] cluster. One can recognise an FAD-binding PCMH-type domain in the interval 249–434 (GGNEGITWYR…LSVFLPWTRP (186 aa)). FAD is bound by residues 277-284 (LLVGNTEV), Phe-357, 367-371 (CIGGN), Asp-380, Leu-424, and Lys-442. Mo-molybdopterin-binding residues include Gln-788 and Phe-819. Glu-823 and Arg-901 together coordinate substrate. Mo-molybdopterin is bound at residue Arg-933. 2 residues coordinate substrate: Phe-935 and Thr-1031. Ala-1100 is a Mo-molybdopterin binding site. The Proton acceptor role is filled by Glu-1289.

It belongs to the xanthine dehydrogenase family. In terms of assembly, homodimer. Requires [2Fe-2S] cluster as cofactor. It depends on FAD as a cofactor. The cofactor is Mo-molybdopterin. Expressed in roots, leaves, stems, flowers and siliques.

It catalyses the reaction xanthine + NAD(+) + H2O = urate + NADH + H(+). The catalysed reaction is hypoxanthine + NAD(+) + H2O = xanthine + NADH + H(+). In terms of biological role, key enzyme involved in purine catabolism. Catalyzes the oxidation of hypoxanthine to xanthine and the oxidation of xanthine to urate. Regulates the level of ureides and plays a role during plant growth and development and senescence. The protein is Xanthine dehydrogenase 2 (XDH2) of Arabidopsis thaliana (Mouse-ear cress).